Here is a 265-residue protein sequence, read N- to C-terminus: Mlc titration factor A (265 aa).

Zn(2+)-binding residues include His-111, His-148, His-152, and Glu-211.

Belongs to the MtfA family. In terms of assembly, interacts with Mlc. Zn(2+) serves as cofactor.

The protein resides in the cytoplasm. Functionally, involved in the modulation of the activity of the glucose-phosphotransferase system (glucose-PTS). Interacts with the transcriptional repressor Mlc, preventing its interaction with DNA and leading to the modulation of expression of genes regulated by Mlc, including ptsG, which encodes the PTS system glucose-specific EIICB component. Its function is as follows. Shows zinc-dependent metallopeptidase activity. The sequence is that of Mlc titration factor A from Escherichia coli (strain SMS-3-5 / SECEC).